Reading from the N-terminus, the 471-residue chain is Cell division protein FtsP (471 aa).

A signal peptide (tat-type signal) is located at residues 1 to 27 (MSLSRRSFLQASGVALAAGALPLKAEA). Positions 229-288 (VRLRLLNASNARRYELSMTDNRAFHVVASDLGFLPAPMTVKRLSLGPGERREVLVDMSQG) constitute a Plastocyanin-like domain.

The protein belongs to the FtsP family. In terms of processing, predicted to be exported by the Tat system. The position of the signal peptide cleavage has not been experimentally proven.

The protein resides in the periplasm. Its function is as follows. Cell division protein that is required for growth during stress conditions. May be involved in protecting or stabilizing the divisomal assembly under conditions of stress. The chain is Cell division protein FtsP from Rahnella sp. (strain Y9602).